Here is a 324-residue protein sequence, read N- to C-terminus: MGMSNLTRLSEFILLGLSSRSEDQRPLFALFLIIYLVTLMGNLLIILAIHSDPRLQNPMYFFLSILSFADICYTTVIVPKMLVNFLSEKKTISYAECLAQMYFFLVFGNIDSYLLAAMAINRCVAICNPFHYVTVMNRRCCVLLLAFPITFSYFHSLLHVLLVNRLTFCTSNVIHHFFCDVNPVLKLSCSSTFVNEIVAMTEGLASVMAPFVCIIISYLRILIAVLKIPSAAGKHKAFSTCSSHLTVVILFYGSISYVYLQPLSSYTVKDRIATINYTVLTSVLNPFIYSLRNKDMKRGLQKLINKIKSQMSRFSTKTNKICGP.

Residues 1-25 (MGMSNLTRLSEFILLGLSSRSEDQR) lie on the Extracellular side of the membrane. A glycan (N-linked (GlcNAc...) asparagine) is linked at Asn5. A helical membrane pass occupies residues 26-49 (PLFALFLIIYLVTLMGNLLIILAI). Residues 50 to 57 (HSDPRLQN) are Cytoplasmic-facing. A helical transmembrane segment spans residues 58–79 (PMYFFLSILSFADICYTTVIVP). Residues 80–100 (KMLVNFLSEKKTISYAECLAQ) lie on the Extracellular side of the membrane. Residues Cys97 and Cys189 are joined by a disulfide bond. The chain crosses the membrane as a helical span at residues 101–120 (MYFFLVFGNIDSYLLAAMAI). Residues 121–139 (NRCVAICNPFHYVTVMNRR) are Cytoplasmic-facing. The chain crosses the membrane as a helical span at residues 140–158 (CCVLLLAFPITFSYFHSLL). The Extracellular portion of the chain corresponds to 159 to 196 (HVLLVNRLTFCTSNVIHHFFCDVNPVLKLSCSSTFVNE). Residues 197-219 (IVAMTEGLASVMAPFVCIIISYL) form a helical membrane-spanning segment. At 220–236 (RILIAVLKIPSAAGKHK) the chain is on the cytoplasmic side. The helical transmembrane segment at 237–259 (AFSTCSSHLTVVILFYGSISYVY) threads the bilayer. At 260 to 271 (LQPLSSYTVKDR) the chain is on the extracellular side. Residues 272–291 (IATINYTVLTSVLNPFIYSL) form a helical membrane-spanning segment. Residues 292-324 (RNKDMKRGLQKLINKIKSQMSRFSTKTNKICGP) are Cytoplasmic-facing.

Belongs to the G-protein coupled receptor 1 family.

The protein localises to the cell membrane. Odorant receptor. The protein is Olfactory receptor 1L3 (OR1L3) of Homo sapiens (Human).